Consider the following 938-residue polypeptide: Leucine--tRNA ligase 1 (938 aa).

The 'HIGH' region motif lies at proline 40–histidine 50. The short motif at lysine 620–serine 624 is the 'KMSKS' region element. Residue lysine 623 participates in ATP binding.

The protein belongs to the class-I aminoacyl-tRNA synthetase family.

It localises to the cytoplasm. It catalyses the reaction tRNA(Leu) + L-leucine + ATP = L-leucyl-tRNA(Leu) + AMP + diphosphate. This Metallosphaera sedula (strain ATCC 51363 / DSM 5348 / JCM 9185 / NBRC 15509 / TH2) protein is Leucine--tRNA ligase 1.